The chain runs to 378 residues: P2X receptor A (378 aa).

The Cytoplasmic portion of the chain corresponds to 1-27; it reads MGFSFDWDDIFQYSTVKIVRIRDRRLG. The helical transmembrane segment at 28–48 threads the bilayer; that stretch reads ILHLSFLVGIVAYIVVYSAII. Topologically, residues 49 to 307 are lumenal; the sequence is KKGYLFTEVP…IQTGTIGSFH (259 aa). The segment at 290-303 is pore-forming motif; the sequence is RHGIRVIFIQTGTI. A helical membrane pass occupies residues 308 to 328; it reads FQTLLLTLVSGLGLLAVATTV. Topologically, residues 329–378 are cytoplasmic; sequence VDQLAIRLLPQRKSYSSLKFQVTESMSNPMKKRITTDEGEDVLYTRIEGL.

Belongs to the P2X receptor family.

It localises to the contractile vacuole membrane. In terms of biological role, P2X receptors are ATP-gated ion channels that play a role in intracellular calcium signaling. Not required for the purinergic response to extracellular nucleotides. Inward currents evoked by intracellular ATP and ATP analogs. Exclusively selective for ATP over other nucleotides. Insensitive to P2 receptor antagonists PPADS, suramin and 2',3'-O-(2,4,6-trinitrophenyl)-ATP but inhibited by nanomolar concentrations of copper and sodium ion. More permeable to ammonium than either sodium or potassium ions and less permeable to choline. It has been reported that p2xA is not essential for osmoregulation, however this information is in contradiction with another source which indicates that p2xA is required for osmoregulation. Found to be permeable to chloride ions. Inhibited by copper and sodium ions. This Dictyostelium discoideum (Social amoeba) protein is P2X receptor A (p2xA).